Consider the following 481-residue polypeptide: MSSDPHRKLHVVFFPFMAYGHMIPTLDMAKLFSSRGAKSTILTTPLNSKIFQKPIERFKNLNPSFEIDIQIFDFPCVDLGLPEGCENVDFFTSNNNDDRQYLTLKFFKSTRFFKDQLEKLLETTRPDCLIADMFFPWATEAAEKFNVPRLVFHGTGYFSLCSEYCIRVHNPQNIVASRYEPFVIPDLPGNIVITQEQIADRDEESEMGKFMIEVKESDVKSSGVIVNSFYELEPDYADFYKSVVLKRAWHIGPLSVYNRGFEEKAERGKKASINEVECLKWLDSKKPDSVIYISFGSVACFKNEQLFEIAAGLETSGANFIWVVRKNIGIEKEEWLPEGFEERVKGKGMIIRGWAPQVLILDHQATCGFVTHCGWNSLLEGVAAGLPMVTWPVAAEQFYNEKLVTQVLRTGVSVGAKKNVRTTGDFISREKVVKAVREVLVGEEADERRERAKKLAEMAKAAVEGGSSFNDLNSFIEEFTS.

H21 serves as the catalytic Proton acceptor. An anthocyanidin is bound at residue H21. The active-site Charge relay is the D132. UDP-alpha-D-glucose-binding residues include A355, Q357, H372, W375, N376, S377, and E380. Residue A395 coordinates an anthocyanidin. UDP-alpha-D-glucose-binding residues include E396 and Q397.

It belongs to the UDP-glycosyltransferase family. Expressed in roots and flowers.

The catalysed reaction is a flavonol + UDP-alpha-D-glucose = a flavonol 3-O-beta-D-glucoside + UDP + H(+). Its function is as follows. Possesses quercetin 3-O-glucosyltransferase activity in vitro. Also active in vitro on benzoates and benzoate derivatives. Involved in stress or defense responses. This is UDP-glycosyltransferase 73B3 (UGT73B3) from Arabidopsis thaliana (Mouse-ear cress).